The chain runs to 205 residues: Urease accessory protein UreG (205 aa).

14-21 contacts GTP; that stretch reads GPVGSGKT.

It belongs to the SIMIBI class G3E GTPase family. UreG subfamily. Homodimer. UreD, UreF and UreG form a complex that acts as a GTP-hydrolysis-dependent molecular chaperone, activating the urease apoprotein by helping to assemble the nickel containing metallocenter of UreC. The UreE protein probably delivers the nickel.

The protein localises to the cytoplasm. Facilitates the functional incorporation of the urease nickel metallocenter. This process requires GTP hydrolysis, probably effectuated by UreG. The polypeptide is Urease accessory protein UreG (Enterobacter sp. (strain 638)).